The sequence spans 73 residues: Putative neurotoxin NaH-Cpp1a (73 aa).

The signal sequence occupies residues methionine 1–serine 23. Intrachain disulfides connect cysteine 43–cysteine 58, cysteine 50–cysteine 63, and cysteine 57–cysteine 70.

Expressed outside of acontia.

The protein resides in the secreted. It is found in the nematocyst. In terms of biological role, putative neurotoxin. This is Putative neurotoxin NaH-Cpp1a from Calliactis polypus (Hermit crab anemone).